The following is a 450-amino-acid chain: Asparagine--tRNA ligase (450 aa).

It belongs to the class-II aminoacyl-tRNA synthetase family. In terms of assembly, homodimer.

It localises to the cytoplasm. The catalysed reaction is tRNA(Asn) + L-asparagine + ATP = L-asparaginyl-tRNA(Asn) + AMP + diphosphate + H(+). The chain is Asparagine--tRNA ligase from Enterococcus faecalis (strain ATCC 700802 / V583).